A 96-amino-acid chain; its full sequence is MKKVIVALGVLAFANVLMATDVKALVKGCAACHGVKFEKKALGKSKIVNMMSEKEIEEDLMAFKSGANKNPVMTAQAKKLSDEDIKALAKYIPTLK.

Residues 1–19 (MKKVIVALGVLAFANVLMA) form the signal peptide. Heme c contacts are provided by Cys29, Cys32, His33, and Met73.

The protein belongs to the cytochrome c family. Post-translationally, binds 1 heme c group covalently per subunit.

It localises to the periplasm. Functionally, natural electron acceptor for a formate dehydrogenase. The polypeptide is Cytochrome c-553 (Helicobacter pylori (strain J99 / ATCC 700824) (Campylobacter pylori J99)).